A 1336-amino-acid polypeptide reads, in one-letter code: Cytokinesis protein sepH (1336 aa).

Residues 1 to 10 show a composition bias toward low complexity; the sequence is MVSRSSETSE. The segment at 1–46 is disordered; sequence MVSRSSETSEGPPPPSKIPGTPAKTRLSRLNSSPAKQDKPKDDRVV. The segment covering 36 to 46 has biased composition (basic and acidic residues); sequence KQDKPKDDRVV. The Protein kinase domain maps to 59-309; that stretch reads YQLGDCLGKG…ARKLLKHPWI (251 aa). ATP contacts are provided by residues 65 to 73 and lysine 88; that span reads LGKGAFGSV. The Proton acceptor role is filled by aspartate 181. The tract at residues 368-402 is disordered; that stretch reads SRYTPTKDILPSPVSKHVTDRFRSPDSTEEDNWDD. A compositionally biased stretch (basic and acidic residues) spans 384–393; the sequence is HVTDRFRSPD. The stretch at 654-682 forms a coiled coil; it reads AQLEEGLDEVDLEANIARDKYARLRGQVE. A compositionally biased stretch (basic and acidic residues) spans 1194 to 1205; sequence ERSESFSLEKRK. Residues 1194–1336 form a disordered region; it reads ERSESFSLEK…PTHADSDWAS (143 aa). Polar residues predominate over residues 1213–1236; it reads TSTTPPGYLANQSAPATPQINRFN. Composition is skewed to low complexity over residues 1253-1264 and 1272-1285; these read PSLSSSALALRP and PSLS…AGPS. A compositionally biased stretch (basic residues) spans 1315 to 1327; it reads SRRRSILPQRRRP.

This sequence belongs to the protein kinase superfamily. Ser/Thr protein kinase family. CDC7 subfamily. It depends on Mg(2+) as a cofactor.

It catalyses the reaction L-seryl-[protein] + ATP = O-phospho-L-seryl-[protein] + ADP + H(+). It carries out the reaction L-threonyl-[protein] + ATP = O-phospho-L-threonyl-[protein] + ADP + H(+). Its function is as follows. Required for early events during cytokinesis including localization of cytoskeletal components to the cytokinetic ring. This is Cytokinesis protein sepH from Aspergillus niger (strain ATCC MYA-4892 / CBS 513.88 / FGSC A1513).